Here is a 496-residue protein sequence, read N- to C-terminus: GTPase Der (496 aa).

2 EngA-type G domains span residues 3 to 166 (PVVA…FDNL) and 208 to 381 (IKLA…RSAT). GTP contacts are provided by residues 9–16 (GRPNVGKS), 56–60 (DTGGI), 118–121 (NKVD), 214–221 (GRPNVGKS), 261–265 (DTAGV), and 326–329 (NKWD). Residues 382 to 466 (TRVGTSVLTR…PIRIQFQNSD (85 aa)) enclose the KH-like domain.

This sequence belongs to the TRAFAC class TrmE-Era-EngA-EngB-Septin-like GTPase superfamily. EngA (Der) GTPase family. Associates with the 50S ribosomal subunit.

Functionally, GTPase that plays an essential role in the late steps of ribosome biogenesis. The chain is GTPase Der from Vibrio vulnificus (strain YJ016).